Consider the following 308-residue polypeptide: MTGKHVAVLMGGFSSERSVSLSSGVACATTLEECGYRVTRIDVDRNVASILVELKPDVVFNALHGPFGEDGAIQGVLEYLQIPYTHSGVLASALAMDKDRAKKVAAAAGVVVAPSRLMNRFDIGSQHPMKPPYVVKPVREGSSFGVVIVKEDQPHPPQVIGSADWKYGDEVMVEGYIAGRELTCAVMGDRAMDVCEIIPVGYQFYDYDSKYVAGASTHVSPAKILPNIYQKIQTMALTAHRAIGCRGVSRSDFRFDDRFSEEGEVVWLEINTQPGMTPTSLVPDIAKAAGISFAELLSWMVEDASCLR.

One can recognise an ATP-grasp domain in the interval 102-302; it reads KKVAAAAGVV…FAELLSWMVE (201 aa). Position 128–183 (128–183) interacts with ATP; that stretch reads PMKPPYVVKPVREGSSFGVVIVKEDQPHPPQVIGSADWKYGDEVMVEGYIAGRELT. 3 residues coordinate Mg(2+): Asp252, Glu269, and Asn271.

This sequence belongs to the D-alanine--D-alanine ligase family. It depends on Mg(2+) as a cofactor. Mn(2+) serves as cofactor.

The protein resides in the cytoplasm. The enzyme catalyses 2 D-alanine + ATP = D-alanyl-D-alanine + ADP + phosphate + H(+). It participates in cell wall biogenesis; peptidoglycan biosynthesis. Functionally, cell wall formation. This chain is D-alanine--D-alanine ligase B, found in Brucella suis biovar 1 (strain 1330).